We begin with the raw amino-acid sequence, 366 residues long: Endogenous Bornavirus-like nucleoprotein 1 (366 aa).

The span at 1 to 15 (MSRPRNNPQTSSPQD) shows a compositional bias: polar residues. A disordered region spans residues 1–22 (MSRPRNNPQTSSPQDSTKDGSS).

Expression detected by RT-PCR in a few cell lines, including OL, HEK293T and MOLT-4. Not observed in HeLa cells.

Its function is as follows. May act as an RNA-binding protein. Highly homologous to the bornavirus nucleocapsid N protein that binds viral RNA and oligomerizes. The chain is Endogenous Bornavirus-like nucleoprotein 1 (EBLN1) from Homo sapiens (Human).